The chain runs to 446 residues: Tubulin beta chain (446 aa).

Residues Gln11, Glu69, Ser138, Gly142, Thr143, Gly144, Asn204, and Asn226 each coordinate GTP. Glu69 contacts Mg(2+). Residues 421-446 (EYQQYQDAGIDEEEEEYEEELPEGEE) form a disordered region. The segment covering 429 to 446 (GIDEEEEEYEEELPEGEE) has biased composition (acidic residues).

It belongs to the tubulin family. As to quaternary structure, dimer of alpha and beta chains. A typical microtubule is a hollow water-filled tube with an outer diameter of 25 nm and an inner diameter of 15 nM. Alpha-beta heterodimers associate head-to-tail to form protofilaments running lengthwise along the microtubule wall with the beta-tubulin subunit facing the microtubule plus end conferring a structural polarity. Microtubules usually have 13 protofilaments but different protofilament numbers can be found in some organisms and specialized cells. Requires Mg(2+) as cofactor.

It is found in the cytoplasm. The protein localises to the cytoskeleton. In terms of biological role, tubulin is the major constituent of microtubules, a cylinder consisting of laterally associated linear protofilaments composed of alpha- and beta-tubulin heterodimers. Microtubules grow by the addition of GTP-tubulin dimers to the microtubule end, where a stabilizing cap forms. Below the cap, tubulin dimers are in GDP-bound state, owing to GTPase activity of alpha-tubulin. The sequence is that of Tubulin beta chain (TUB2) from Fusarium fujikuroi (Bakanae and foot rot disease fungus).